A 1097-amino-acid chain; its full sequence is DNA-directed RNA polymerase subunit beta (1097 aa).

Residues 1072–1097 (QDVNPRRSTPSRPTYESLGVADYDED) are disordered.

The protein belongs to the RNA polymerase beta chain family. In terms of assembly, in cyanobacteria the RNAP catalytic core is composed of 2 alpha, 1 beta, 1 beta', 1 gamma and 1 omega subunit. When a sigma factor is associated with the core the holoenzyme is formed, which can initiate transcription.

It catalyses the reaction RNA(n) + a ribonucleoside 5'-triphosphate = RNA(n+1) + diphosphate. Functionally, DNA-dependent RNA polymerase catalyzes the transcription of DNA into RNA using the four ribonucleoside triphosphates as substrates. This is DNA-directed RNA polymerase subunit beta from Parasynechococcus marenigrum (strain WH8102).